We begin with the raw amino-acid sequence, 101 residues long: Small ribosomal subunit protein eS24 (101 aa).

This sequence belongs to the eukaryotic ribosomal protein eS24 family.

This Methanocaldococcus jannaschii (strain ATCC 43067 / DSM 2661 / JAL-1 / JCM 10045 / NBRC 100440) (Methanococcus jannaschii) protein is Small ribosomal subunit protein eS24.